Reading from the N-terminus, the 2437-residue chain is Neurogenic locus notch homolog protein 1 (2437 aa).

Residues 1-20 form the signal peptide; that stretch reads MNRFLVKLTLLTAASLATVA. 4 EGF-like domains span residues 21–57, 58–98, 101–138, and 139–175; these read QGQRCSEYCQNGGICEYKPSGEASCRCPADFVGAQCQ, FPNP…RLCL, VNHACMNSPCRNGGTCSLLTLDTFTCRCQPGWSGKTCQ, and LADPCASNPCANGGQCSAFESHYICTCPPNFHGQTCR. The Extracellular portion of the chain corresponds to 21 to 1726; sequence QGQRCSEYCQ…GGPPKTGEMY (1706 aa). Disulfide bonds link Cys-25–Cys-35, Cys-29–Cys-45, Cys-47–Cys-56, Cys-62–Cys-73, Cys-67–Cys-86, Cys-88–Cys-97, Cys-105–Cys-116, Cys-110–Cys-126, Cys-128–Cys-137, Cys-143–Cys-154, Cys-148–Cys-163, Cys-165–Cys-174, Cys-181–Cys-194, Cys-188–Cys-203, Cys-205–Cys-214, Cys-221–Cys-232, Cys-226–Cys-242, Cys-244–Cys-253, Cys-260–Cys-271, Cys-265–Cys-280, Cys-282–Cys-291, Cys-298–Cys-311, Cys-305–Cys-320, Cys-322–Cys-331, Cys-338–Cys-349, Cys-343–Cys-358, Cys-360–Cys-369, Cys-375–Cys-386, Cys-380–Cys-397, Cys-399–Cys-408, Cys-415–Cys-428, Cys-422–Cys-437, Cys-439–Cys-448, Cys-455–Cys-466, Cys-460–Cys-475, Cys-477–Cys-486, Cys-493–Cys-503, Cys-498–Cys-512, Cys-514–Cys-523, Cys-530–Cys-541, Cys-535–Cys-550, Cys-552–Cys-561, Cys-568–Cys-578, Cys-573–Cys-587, Cys-589–Cys-598, Cys-605–Cys-616, Cys-610–Cys-625, Cys-627–Cys-636, Cys-643–Cys-653, Cys-648–Cys-662, Cys-664–Cys-673, Cys-680–Cys-691, Cys-685–Cys-700, Cys-702–Cys-711, Cys-718–Cys-728, Cys-723–Cys-737, Cys-739–Cys-748, Cys-755–Cys-766, Cys-760–Cys-775, Cys-777–Cys-786, Cys-793–Cys-804, Cys-798–Cys-813, Cys-815–Cys-824, Cys-831–Cys-842, Cys-836–Cys-853, Cys-855–Cys-864, Cys-871–Cys-882, Cys-876–Cys-891, Cys-893–Cys-902, Cys-909–Cys-920, Cys-914–Cys-929, Cys-931–Cys-940, Cys-947–Cys-958, Cys-952–Cys-967, Cys-969–Cys-978, Cys-985–Cys-996, Cys-990–Cys-1005, Cys-1007–Cys-1016, Cys-1023–Cys-1034, Cys-1028–Cys-1043, Cys-1045–Cys-1054, Cys-1061–Cys-1072, Cys-1066–Cys-1081, Cys-1083–Cys-1092, Cys-1099–Cys-1120, Cys-1114–Cys-1129, Cys-1131–Cys-1140, Cys-1147–Cys-1158, Cys-1152–Cys-1167, Cys-1169–Cys-1178, Cys-1185–Cys-1196, Cys-1190–Cys-1205, Cys-1207–Cys-1216, Cys-1223–Cys-1242, Cys-1236–Cys-1251, Cys-1253–Cys-1262, Cys-1269–Cys-1282, Cys-1274–Cys-1291, Cys-1293–Cys-1302, Cys-1309–Cys-1320, Cys-1314–Cys-1332, Cys-1334–Cys-1343, Cys-1350–Cys-1361, Cys-1355–Cys-1370, Cys-1372–Cys-1381, Cys-1389–Cys-1400, Cys-1394–Cys-1411, Cys-1413–Cys-1422, Cys-1447–Cys-1470, Cys-1452–Cys-1465, and Cys-1461–Cys-1477. The EGF-like 5; calcium-binding domain maps to 177-215; sequence DVNECAVSPSPCRNGGTCINEVGSYLCRCPPEYTGPHCQ. The EGF-like 6 domain maps to 217–254; the sequence is LYQPCLPSPCRSGGTCVQTSDTTHTCSCLPGFTGQTCE. O-linked (Fuc...) threonine; alternate glycosylation occurs at Thr-231. Thr-231 carries an O-linked (GalNAc...) threonine; alternate glycan. Positions 256-292 constitute an EGF-like 7; calcium-binding domain; sequence NVDDCTQHACENGGPCIDGINTYNCHCDKHWTGQYCT. Residues 294–332 form the EGF-like 8; calcium-binding domain; that stretch reads DVDECELSPNACQNGGTCHNTIGGFHCVCVNGWTGDDCS. The EGF-like 9; calcium-binding domain occupies 334 to 370; that stretch reads NIDDCASAACSHGATCHDRVASFFCECPHGRTGLLCH. The EGF-like 10 domain occupies 371 to 409; it reads LDDACISNPCQKGSNCDTNPVSGKAICTCPPGYTGSACN. One can recognise an EGF-like 11; calcium-binding domain in the interval 411 to 449; the sequence is DIDECSLGANPCEHGGRCLNTKGSFQCKCLQGYEGPRCE. The EGF-like 12; calcium-binding domain maps to 451–487; the sequence is DVNECKSNPCQNDATCLDQIGGFHCICMPGYEGVFCQ. Residues 489 to 524 form the EGF-like 13; calcium-binding domain; it reads NSDDCASQPCLNGKCIDKINSFHCECPKGFSGSLCQ. The region spanning 526–562 is the EGF-like 14; calcium-binding domain; sequence DVDECASTPCKNGAKCTDGPNKYTCECTPGFSGIHCE. Residues 564–599 form the EGF-like 15; calcium-binding domain; sequence DINECASSPCHYGVCRDGVASFTCDCRPGYTGRLCE. One can recognise an EGF-like 16; calcium-binding domain in the interval 601-637; the sequence is NINECLSQPCRNGGTCQDRENAYICTCPKGTTGVNCE. The 36-residue stretch at 639-674 folds into the EGF-like 17; calcium-binding domain; it reads NIDDCKRKPCDYGKCIDKINGYECVCEPGYSGSMCN. The region spanning 676–712 is the EGF-like 18; calcium-binding domain; it reads NIDDCALNPCHNGGTCIDGVNSFTCLCPDGFRDATCL. In terms of domain architecture, EGF-like 19; calcium-binding spans 714 to 749; the sequence is QHNECSSNPCIHGSCLDQINSYRCVCEAGWMGRNCD. The EGF-like 20; calcium-binding domain occupies 751 to 787; that stretch reads NINECLSNPCVNGGTCKDMTSGYLCTCRAGFSGPNCQ. The region spanning 789–825 is the EGF-like 21; calcium-binding domain; that stretch reads NINECASNPCLNQGSCIDDVAGFKCNCMLPYTGEVCE. The EGF-like 22 domain occupies 827-865; it reads VLAPCSPRPCKNGGVCRESEDFQSFSCNCPAGWQGQTCE. The region spanning 867–903 is the EGF-like 23; calcium-binding domain; that stretch reads DINECVRNPCTNGGVCENLRGGFQCRCNPGFTGALCE. The region spanning 905-941 is the EGF-like 24; calcium-binding domain; it reads DIDDCEPNPCSNGGVCQDRVNGFVCVCLAGFRGERCA. Residues 943 to 979 enclose the EGF-like 25; calcium-binding domain; that stretch reads DIDECVSAPCRNGGNCTDCVNSYTCSCPAGFSGINCE. Asn-957 carries N-linked (GlcNAc...) asparagine glycosylation. One can recognise an EGF-like 26 domain in the interval 981 to 1017; sequence NTPDCTESSCFNGGTCVDGISSFSCVCLPGFTGNYCQ. One can recognise an EGF-like 27; calcium-binding domain in the interval 1019 to 1055; that stretch reads DVNECDSRPCQNGGSCQDGYGTYKCTCPHGYTGLNCQ. 2 consecutive EGF-like domains span residues 1057–1093 and 1095–1141; these read LVRWCDSSPCKNGGSCWQQGASFTCQCASGWTGIYCD and PSVS…SYCQ. The 37-residue stretch at 1143-1179 folds into the EGF-like 30; calcium-binding domain; the sequence is QVDECQPNPCQNGATCTDYLGGYSCECVPGYHGMNCS. Asn-1177 is a glycosylation site (N-linked (GlcNAc...) asparagine). The region spanning 1181 to 1217 is the EGF-like 31; calcium-binding domain; it reads EINECLSQPCQNGGTCIDLVNTYKCSCPRGTQGVHCE. Positions 1219–1263 constitute an EGF-like 32; calcium-binding domain; the sequence is DIDDCSPSVDPLTGEPRCFNGGRCVDRVGGYGCVCPAGFVGERCE. EGF-like domains follow at residues 1265 to 1303, 1305 to 1344, 1346 to 1382, and 1385 to 1423; these read DVNECLSDPCDPSGSYNCVQLINDFRCECRTGYTGKRCE, VFNGCKDTPCKNGGTCAVASNTKHGYICKCQPGYSGSSCE, DSQSCGSLRCRNGATCVSGHLSPRCLCAPGFSGHECQ, and MDSPCLVNPCYNGGTCQPISDAPFYRCSCPANFNGLLCH. O-linked (Fuc...) threonine; alternate glycosylation is present at Thr-1399. An O-linked (GalNAc...) threonine; alternate glycan is attached at Thr-1399. LNR repeat units lie at residues 1447–1487, 1488–1525, and 1526–1566; these read CEIA…PWQN, CSAALQCWRYFNDGKCDEQCATAGCLYDGFDCQRLEGQ, and CNPL…VPQK. Asn-1487 carries N-linked (GlcNAc...) asparagine glycosylation. Disulfide bonds link Cys-1488/Cys-1512, Cys-1494/Cys-1507, Cys-1503/Cys-1519, Cys-1526/Cys-1552, Cys-1534/Cys-1547, and Cys-1543/Cys-1559. A glycan (N-linked (GlcNAc...) asparagine) is linked at Asn-1585. Residues 1727 to 1747 form a helical membrane-spanning segment; that stretch reads PMFLVLLALAVLALAAVGVVV. Residues 1748–2437 are Cytoplasmic-facing; sequence SRKRKREHGQ…QMNHIPEAFK (690 aa). A disordered region spans residues 1770-1790; sequence KKKRREPVGEDSVGLKPLKNS. ANK repeat units follow at residues 1867–1910, 1915–1944, 1948–1978, 1982–2011, 2015–2044, and 2048–2077; these read DGFT…NLHN, TGETALHLAARYARSDAAKRLLESCADANV, MGRTPLHAAVAADAQGVFQILIRNRATDLDA, DGTTPLILATRLAVEGMVEELINCHADPNA, SGKSALHWAAAVNNVDAAVVLLKNGANKDL, and KEETPLFLAAREGSYETAKVLLDHLANRDI. Disordered stretches follow at residues 2127–2174 and 2356–2437; these read IKPS…GGIM and RMAP…EAFK. The segment covering 2356–2387 has biased composition (polar residues); the sequence is RMAPPISSTQFLTPPSQHSYSNPMDNTPNHQQ. Over residues 2396-2411 the composition is skewed to low complexity; that stretch reads PSAGSPDQWSSSSPHS. Residues 2412-2429 are compositionally biased toward polar residues; sequence NLSDWSEGISSPPTSMQM.

It belongs to the NOTCH family. Synthesized in the endoplasmic reticulum as an inactive form which is proteolytically cleaved by a furin-like convertase in the trans-Golgi network before it reaches the plasma membrane to yield an active, ligand-accessible form. Cleavage results in a C-terminal fragment N(TM) and a N-terminal fragment N(EC). Following ligand binding, it is cleaved by adam17 to yield a membrane-associated intermediate fragment called notch extracellular truncation (NEXT). Following endocytosis, this fragment is then cleaved by presenilin dependent gamma-secretase to release a Notch-derived peptide containing the intracellular domain (NICD) from the membrane. Post-translationally, O-glycosylated on the EGF-like domains. Contains both O-linked fucose and O-linked glucose. O-linked glycosylation by galnt11 is involved in determination of left/right symmetry: glycosylation promotes activation of notch1, possibly by promoting cleavage by adam17, modulating the balance between motile and immotile (sensory) cilia at the left-right organiser (LRO).

The protein localises to the cell membrane. Its subcellular location is the nucleus. Functionally, functions as a receptor for membrane-bound ligands Jagged-1 (JAG1), Jagged-2 (JAG2) and Delta-1 (DLL1) to regulate cell-fate determination. Upon ligand activation through the released notch intracellular domain (NICD) it forms a transcriptional activator complex with RBPJ/RBPSUH and activates genes of the enhancer of split locus. Affects the implementation of differentiation, proliferation and apoptotic programs. Involved in angiogenesis; negatively regulates endothelial cell proliferation and migration and angiogenic sprouting. Involved in the maturation of both CD4(+) and CD8(+) cells in the thymus. Important for follicular differentiation and possibly cell fate selection within the follicle. During cerebellar development, functions as a receptor for neuronal DNER and is involved in the differentiation of Bergmann glia. Represses neuronal and myogenic differentiation. May play an essential role in postimplantation development, probably in some aspect of cell specification and/or differentiation. May be involved in mesoderm development, somite formation and neurogenesis. Involved in determination of left/right symmetry by modulating the balance between motile and immotile (sensory) cilia at the left-right organiser (LRO). In Danio rerio (Zebrafish), this protein is Neurogenic locus notch homolog protein 1 (notch1a).